Reading from the N-terminus, the 456-residue chain is Alcohol acyltransferase 1 (456 aa).

Residues His-166 and Asp-382 each act as proton acceptor in the active site.

The protein belongs to the plant acyltransferase family.

Involved in the biosynthesis of volatile esters which confer kiwifruit flavor. Alcohol acyl transferase that can use a wide range of alcohols as substrate to produce esters. The protein is Alcohol acyltransferase 1 of Actinidia chinensis var. chinensis (Chinese soft-hair kiwi).